The sequence spans 238 residues: Sarcospan (238 aa).

The disordered stretch occupies residues 1–33 (MGKDRQPRGQQRQGDAAGPDDPGPKKGAGTREQ). At 1–48 (MGKDRQPRGQQRQGDAAGPDDPGPKKGAGTREQRGEEEAQTCCGCRFP) the chain is on the extracellular side. Positions 8–20 (RGQQRQGDAAGPD) are enriched in low complexity. Residues 49 to 69 (LLLALLQLALGVAVTVVGFLM) traverse the membrane as a helical segment. The Cytoplasmic segment spans residues 70–81 (ASVSSSLLVRAT). A helical transmembrane segment spans residues 82–102 (PYWAGIIVCVVAYLGLFMLCV). Topologically, residues 103 to 117 (SYQVDERTCIQFSMK) are cytoplasmic. A helical membrane pass occupies residues 118 to 138 (LLYFVLSALGLVVCVLAVAFA). Residues 139 to 188 (AHHYSLLTHLTCENAPDSCQCKLPSSEPLSRTFVYRDVTDCTSITGTFQV) lie on the Extracellular side of the membrane. Residues 189–209 (FLLVQMVLNLVCGLVCLVACF) traverse the membrane as a helical segment. The Cytoplasmic portion of the chain corresponds to 210 to 238 (VMWKHRYQVFYVGVRMCPLSASEGQQQKV).

The protein localises to the cell membrane. It localises to the sarcolemma. The protein resides in the postsynaptic cell membrane. Its function is as follows. Component of the dystrophin-glycoprotein complex (DGC), a complex that spans the muscle plasma membrane and forms a link between the F-actin cytoskeleton and the extracellular matrix. Preferentially associates with the sarcoglycan subcomplex of the DGC. The polypeptide is Sarcospan (SSPN) (Oryctolagus cuniculus (Rabbit)).